Consider the following 1022-residue polypeptide: Collagen alpha-1(I) chain (1022 aa).

A disordered region spans residues 1–1022 (SAGGISVPGP…PGPPGPPGPP (1022 aa)). 4-hydroxyproline occurs at positions 20, 23, 26, 35, 38, 41, 56, 71, 77, 86, and 92. A compositionally biased stretch (low complexity) spans 28–47 (PQGFQGPPGEPGEPGASGPM). Basic and acidic residues predominate over residues 59 to 73 (NGDDGEAGKPGRPGE). The residue at position 95 (Lys-95) is a 5-hydroxylysine; alternate. O-linked (Gal...) hydroxylysine; alternate glycosylation occurs at Lys-95. Ser-101 carries the phosphoserine modification. Positions 109 to 125 (DAGPAGPKGEPGSPGEN) are enriched in low complexity. A 4-hydroxyproline mark is found at Pro-119, Pro-122, Pro-128, Pro-137, Pro-143, Pro-164, Pro-173, Pro-176, Pro-203, Pro-206, Pro-218, Pro-224, Pro-233, Pro-239, Pro-242, and Pro-257. Positions 143 to 161 (PGASGPAGARGNDGAAGAA) are enriched in low complexity. Residues 163–175 (PPGPTGPAGPPGF) are compositionally biased toward pro residues. Residues 209–259 (AGAAGPAGNPGADGQPGAKGANGAPGIAGAPGFPGARGPSGPQGPSGAPGP) show a composition bias toward low complexity. Position 260 is a 5-hydroxylysine (Lys-260). Pro-266, Pro-269, Pro-281, Pro-290, Pro-305, Pro-311, Pro-320, and Pro-326 each carry 4-hydroxyproline. The span at 315 to 324 (GERGGPGSRG) shows a compositional bias: gly residues. Lys-335 carries the post-translational modification 5-hydroxylysine. Pro-344, Pro-353, Pro-359, Pro-365, Pro-374, Pro-377, Pro-386, Pro-395, Pro-401, Pro-413, Pro-422, Pro-431, Pro-434, Pro-452, Pro-470, Pro-476, Pro-482, Pro-488, Pro-494, Pro-500, Pro-512, Pro-521, Pro-533, Pro-545, Pro-548, Pro-554, Pro-560, and Pro-569 each carry 4-hydroxyproline. Positions 368 to 394 (KGLTGSPGSPGPDGKTGPPGPAGQDGR) are enriched in low complexity. A compositionally biased stretch (low complexity) spans 403–422 (ARGQAGVMGFPGPKGAAGEP). Positions 464 to 491 (QGPAGSPGFQGLPGPAGPPGEAGKPGEQ) are enriched in low complexity. The span at 530-557 (NGAPGNDGAKGDAGAPGAPGSQGAPGLQ) shows a compositional bias: low complexity. Position 581 is a 5-hydroxylysine (Lys-581). 4-hydroxyproline is present on residues Pro-587, Pro-602, and Pro-608. A compositionally biased stretch (low complexity) spans 614 to 628 (SGPSGPAGPTGARGA). Ser-617 carries the phosphoserine modification. Residues Pro-629, Pro-635, Pro-638, Pro-647, Pro-653, Pro-671, Pro-680, and Pro-689 each carry the 4-hydroxyproline modification. Over residues 641 to 668 (AGFAGPPGADGQPGAKGEPGDAGAKGDA) the composition is skewed to low complexity. Residues 670–682 (PPGPAGPTGPPGP) show a composition bias toward pro residues. The residue at position 692 (Lys-692) is a 5-hydroxylysine. A compositionally biased stretch (low complexity) spans 697–713 (SAGPPGATGFPGAAGRV). A 4-hydroxyproline mark is found at Pro-701 and Pro-707. Pro-715 carries the 3-hydroxyproline modification. 16 positions are modified to 4-hydroxyproline: Pro-716, Pro-725, Pro-728, Pro-749, Pro-758, Pro-767, Pro-776, Pro-794, Pro-803, Pro-806, Pro-812, Pro-827, Pro-833, Pro-839, Pro-848, and Pro-854. Residues 742–751 (ETGPAGRPGE) show a composition bias toward low complexity. Residues 761 to 776 (TGEKGSPGADGPAGAP) are compositionally biased toward low complexity. Residues 826–836 (PPGPVGPPGLA) are compositionally biased toward pro residues. Residues 838–853 (PPGESGREGSPGAEGS) are compositionally biased toward low complexity. The residue at position 863 (Lys-863) is a 5-hydroxylysine. The span at 872–887 (AGPPGAPGAPGAPGPV) shows a compositional bias: pro residues. A 4-hydroxyproline mark is found at Pro-875, Pro-878, and Pro-881. The span at 908–922 (AGPAGARGPAGPQGP) shows a compositional bias: low complexity. The span at 923–937 (RGDKGETGEQGDRGI) shows a compositional bias: basic and acidic residues. Residue Lys-926 is modified to 5-hydroxylysine. Lys-938 is subject to 5-hydroxylysine; alternate. O-linked (Gal...) hydroxylysine; alternate glycosylation is present at Lys-938. 4 positions are modified to 4-hydroxyproline: Pro-953, Pro-956, Pro-974, and Pro-989. Low complexity predominate over residues 956–989 (PGEQGPSGASGPAGPRGPPGSAGSPGKDGLNGLP). A 3-hydroxyproline modification is found at Pro-994. Position 995 is a 4-hydroxyproline (Pro-995). The span at 1007 to 1022 (VGPPGPPGPPGPPGPP) shows a compositional bias: pro residues. Pro-1009 carries the post-translational modification 3-hydroxyproline. A 4-hydroxyproline modification is found at Pro-1010. The residue at position 1012 (Pro-1012) is a 3-hydroxyproline. Residue Pro-1013 is modified to 4-hydroxyproline. Pro-1015 bears the 3-hydroxyproline mark. 4-hydroxyproline is present on residues Pro-1016, Pro-1019, and Pro-1022.

Belongs to the fibrillar collagen family. Trimers of one alpha 2(I) and two alpha 1(I) chains. Prolines at the third position of the tripeptide repeating unit (G-X-Y) are hydroxylated in some or all of the chains. Expressed in bone.

Its subcellular location is the secreted. It is found in the extracellular space. The protein resides in the extracellular matrix. Type I collagen is a member of group I collagen (fibrillar forming collagen). The chain is Collagen alpha-1(I) chain from Mylodon darwinii (Giant ground sloth).